The sequence spans 179 residues: uncharacterized protein (179 aa).

Composition is skewed to polar residues over residues 1–37 (PLGAATSNIPPQYARSTLQPTGLTSRAQSYPTNTNPG) and 60–70 (IPTQSTTTFRS). Disordered stretches follow at residues 1 to 41 (PLGA…PSAK) and 60 to 82 (IPTQSTTTFRSNPPLPPVVPGRR).

In terms of tissue distribution, component of the acid-soluble and acid-insoluble organic matrix of calcified shell layers (at protein level).

It localises to the secreted. This is an uncharacterized protein from Haliotis asinina (Donkey's ear abalone).